A 120-amino-acid polypeptide reads, in one-letter code: Chaperonin GroEL (120 aa).

Asp-23–Thr-27 contacts ATP.

The protein belongs to the chaperonin (HSP60) family. As to quaternary structure, forms a cylinder of 14 subunits composed of two heptameric rings stacked back-to-back. Interacts with the co-chaperonin GroES.

The protein resides in the cytoplasm. It catalyses the reaction ATP + H2O + a folded polypeptide = ADP + phosphate + an unfolded polypeptide.. Functionally, together with its co-chaperonin GroES, plays an essential role in assisting protein folding. The GroEL-GroES system forms a nano-cage that allows encapsulation of the non-native substrate proteins and provides a physical environment optimized to promote and accelerate protein folding. The chain is Chaperonin GroEL from Mycobacterium shimoidei.